The primary structure comprises 193 residues: Lipid A acyltransferase PagP (193 aa).

Residues 1–32 form the signal peptide; it reads MNGMAVVMIIRKYFLIIALLVMPWLAIPSVSA. Catalysis depends on residues His65, Asp108, and Ser109.

It belongs to the lipid A palmitoyltransferase family. In terms of assembly, homodimer.

The protein resides in the cell outer membrane. The catalysed reaction is a lipid A + a 1,2-diacyl-sn-glycero-3-phosphocholine = a hepta-acyl lipid A + a 2-acyl-sn-glycero-3-phosphocholine. The enzyme catalyses a lipid IVA + a 1,2-diacyl-sn-glycero-3-phosphocholine = a lipid IVB + a 2-acyl-sn-glycero-3-phosphocholine. It catalyses the reaction a lipid IIA + a 1,2-diacyl-sn-glycero-3-phosphocholine = a lipid IIB + a 2-acyl-sn-glycero-3-phosphocholine. Functionally, transfers a fatty acid residue from the sn-1 position of a phospholipid to the N-linked hydroxyfatty acid chain on the proximal unit of lipid A or its precursors. The protein is Lipid A acyltransferase PagP of Salmonella paratyphi C (strain RKS4594).